A 1681-amino-acid chain; its full sequence is Sodium channel protein type 7 subunit alpha (1681 aa).

Topologically, residues 1–118 are cytoplasmic; that stretch reads MLTSPEPKGL…RRAAIKALVH (118 aa). The stretch at 101–402 is one I repeat; it reads TLSPLNSLRR…ILTMTYEKEK (302 aa). Residues 119–138 traverse the membrane as a helical segment; sequence PLFRLLILISVLTDSILMCM. The Extracellular portion of the chain corresponds to 139–142; the sequence is SNLP. The helical transmembrane segment at 143–168 threads the bilayer; the sequence is EWILAIENTLLGIYAFEILVKVIARG. At 169–179 the chain is on the cytoplasmic side; it reads IWAGSFSFLGD. The chain crosses the membrane as a helical span at residues 180–197; the sequence is LWNWLDFSVTLFELITRF. The Extracellular portion of the chain corresponds to 198–201; the sequence is SPLS. A helical transmembrane segment spans residues 202 to 220; that stretch reads SFLMLKTIRTFRILKIIPL. The Cytoplasmic segment spans residues 221–238; the sequence is NHGLQSIVMTLAQCLKKL. The chain crosses the membrane as a helical span at residues 239–260; the sequence is FGAIALALFFLAVFSLLGMGLF. Residues 261–339 lie on the Extracellular side of the membrane; the sequence is MGNLKHKCLR…PDNGFTSFDN (79 aa). An intrachain disulfide couples Cys268 to Cys308. Asn277, Asn282, Asn288, and Asn310 each carry an N-linked (GlcNAc...) asparagine glycan. The segment at residues 340–367 is an intramembrane region (pore-forming); sequence FGWSLLAMFRLMTQDYPELLYHQILYAS. Residue Gly368 is a topological domain, extracellular. The chain crosses the membrane as a helical span at residues 369–408; it reads KVYMIFFVMISFWFAFYLTSLFLGILTMTYEKEKQRACEE. At 409–506 the chain is on the cytoplasmic side; the sequence is SGGLDPKCQQ…EFADRVITHP (98 aa). The stretch at 488-757 is one II repeat; that stretch reads CSPCWVKLNE…QLAMARIKSG (270 aa). Residues 507 to 522 traverse the membrane as a helical segment; that stretch reads LADLFLVICIVLNICF. Residues 523 to 531 lie on the Extracellular side of the membrane; sequence LALEHFPMS. The chain crosses the membrane as a helical span at residues 532–560; the sequence is EELRSLLHVGNLVFIGIYTIEMILKIIAM. Residues 561–569 are Cytoplasmic-facing; sequence HPYGYFQIS. Residues 570-587 form a helical membrane-spanning segment; it reads WNIFDSILVVLELTEILL. Topologically, residues 588-593 are extracellular; sequence ADVEGL. Residues 594–609 traverse the membrane as a helical segment; the sequence is AVLITVPLIFIKLGKY. Topologically, residues 610–626 are cytoplasmic; the sequence is GPPFKSLMRILGSSLMA. A helical transmembrane segment spans residues 627 to 655; sequence LKDLVLLLCIFVYFSAVFGMKLFGRSYKD. At 656-673 the chain is on the extracellular side; that stretch reads CVCHIKEDCQPQRWHMSD. Intrachain disulfides connect Cys658-Cys664 and Cys696-Cys705. An intramembrane region (pore-forming) is located at residues 674–700; the sequence is FLHAYMTVFRILCGEWIETLWECMEVA. A topological domain (extracellular) is located at residue Gly701. Residues 702–732 traverse the membrane as a helical segment; the sequence is QAWCIPFYMMVILIGNLLILYLFVTLVSSFS. The Cytoplasmic portion of the chain corresponds to 733 to 934; that stretch reads YYDATSEVNK…KTCCKIVENS (202 aa). Over residues 806 to 834 the composition is skewed to polar residues; that stretch reads YKDQSSSTEKTPVTESESQSLIASPSASE. A disordered region spans residues 806–875; the sequence is YKDQSSSTEK…MKQSSSSECS (70 aa). Ser843 is modified (phosphoserine). The stretch at 916-1224 is one III repeat; that stretch reads NGKIWKNIRK…KKQYRALKKL (309 aa). A helical transmembrane segment spans residues 935 to 953; sequence WFECFIGLVTLLCTGTLAL. Over 954 to 961 the chain is Extracellular; that stretch reads EDIYIDQR. Residues 962–990 form a helical membrane-spanning segment; it reads KTTKILLEYADMIFAYIFILEMLLKWVAY. Residues 991 to 998 are Cytoplasmic-facing; that stretch reads GFKAFFSN. The chain crosses the membrane as a helical span at residues 999–1020; it reads NWYKLDFMVVIVFCLSLIGKTR. A topological domain (extracellular) is located at residue Glu1021. A helical membrane pass occupies residues 1022 to 1040; sequence DLNPLTSIKFLRALRVLSQ. Topologically, residues 1041–1055 are cytoplasmic; it reads FERMKVVLRALIKTT. A helical transmembrane segment spans residues 1056-1080; it reads LPTVSVFLVCLMIWLLFSVIGVQLF. Residues 1081 to 1127 lie on the Extracellular side of the membrane; the sequence is AGKFYECIDPTKGERFPVFEVMNKSQCEKLLFNESMPWENAKLNFDN. Cys1087 and Cys1107 are disulfide-bonded. N-linked (GlcNAc...) asparagine glycosylation is found at Asn1103 and Asn1113. The pore-forming intramembrane region spans 1128–1154; the sequence is VGNGFLSLLQVATFNGWISIMNSAIDS. The Extracellular portion of the chain corresponds to 1155-1167; it reads VGVNMQPSFEYNL. A helical transmembrane segment spans residues 1168-1202; the sequence is YMYSYFIIFVIFGLFLPLCMLIGVIIRNFNKQKIK. Over 1203 to 1250 the chain is Cytoplasmic; that stretch reads QGGSNIFITVKQKKQYRALKKLLYADVQKPTPRPRNKFQGFLFDLVTH. The IV repeat unit spans residues 1233-1531; the sequence is TPRPRNKFQG…WNRFDPDRTQ (299 aa). Residues 1251 to 1272 form a helical membrane-spanning segment; that stretch reads RVFNVIIILLICFQATTIMIQK. Topologically, residues 1273 to 1276 are extracellular; it reads DEQS. The chain crosses the membrane as a helical span at residues 1277-1305; that stretch reads PQMETAIFWMNSIFVMLFTLECILKLTAF. At 1306-1312 the chain is on the cytoplasmic side; the sequence is RCHYFTS. The helical transmembrane segment at 1313–1338 threads the bilayer; sequence AWNVHDFMVVIFSITGLLLPLTIGQY. Over 1339-1341 the chain is Extracellular; the sequence is FVP. The chain crosses the membrane as a helical span at residues 1342–1362; it reads PSLVQLILLSRVIHILRPGKG. At 1363 to 1377 the chain is on the cytoplasmic side; that stretch reads PKVFHDLMLPLILAL. The helical transmembrane segment at 1378 to 1402 threads the bilayer; it reads PALLNISLLIFLVMFIYAIFGMYNF. Residues 1403–1420 lie on the Extracellular side of the membrane; the sequence is AYVKKEAGINDVSNFETF. Residues 1421-1444 constitute an intramembrane region (pore-forming); that stretch reads GSSMLCLFQVTTFSGWDGMLDAIF. Residues 1445–1468 are Extracellular-facing; that stretch reads NSQWSDCDPDKINPGTQVKGDCGS. Cys1451 and Cys1466 are oxidised to a cystine. The chain crosses the membrane as a helical span at residues 1469-1504; sequence PSVGISYFVSYILISWLIIVNMYIVLIMEFLSIPSQ. At 1505-1681 the chain is on the cytoplasmic side; it reads KKSRTLSEDD…EEKASIQTQI (177 aa). Over residues 1647–1662 the composition is skewed to basic and acidic residues; sequence NVSDTPAIDDRRDDLT. A disordered region spans residues 1647–1681; sequence NVSDTPAIDDRRDDLTSKGAHSGKIEEKASIQTQI.

This sequence belongs to the sodium channel (TC 1.A.1.10) family. SCN7A subfamily. As to quaternary structure, the sodium channel formed by SCN7A is probably a heterooligomeric complex consisting of the ion conducting pore forming alpha subunit SCN7A and regulatory beta subunits such as SCN3B. Interacts with ATP1A1; activates ATP1A1 and thereby indirectly signals to nearby neurons to regulate sodium homeostasis. Not tissue specific but widely expressed. Expressed in regions of the central nervous system that control body fluid ionic balance.

Its subcellular location is the cell membrane. The catalysed reaction is Na(+)(in) = Na(+)(out). Functionally, sodium leak channel functioning as an osmosensor regulating sodium ion levels in various tissues and organs. While most sodium channels are voltage-gated, SCN7A is not and lets sodium flow through membrane along its concentration gradient. In glial cells of the central nervous system, senses body-fluid sodium levels and controls salt intake behavior as well as voluntary water intake through activation of nearby neurons to maintain appropriate sodium levels in the body. By mediating sodium influx into keratinocytes, also plays a role in skin barrier homeostasis. This Mus musculus (Mouse) protein is Sodium channel protein type 7 subunit alpha.